Consider the following 240-residue polypeptide: Cell division protein FtsQ (240 aa).

The Cytoplasmic segment spans residues 1–7 (MTGPGLR). A helical transmembrane segment spans residues 8–28 (LLAGMGLAGALVLGLSLWLHF). Over 29–240 (DPDQHLPIGS…EADNDGGNAR (212 aa)) the chain is Periplasmic. The POTRA domain occupies 34-102 (LPIGSIQITG…DTLEVHVTEP (69 aa)).

It belongs to the FtsQ/DivIB family. FtsQ subfamily. Part of a complex composed of FtsB, FtsL and FtsQ.

It localises to the cell inner membrane. Functionally, essential cell division protein. May link together the upstream cell division proteins, which are predominantly cytoplasmic, with the downstream cell division proteins, which are predominantly periplasmic. May control correct divisome assembly. In Thioalkalivibrio sp. (strain K90mix), this protein is Cell division protein FtsQ.